Here is a 586-residue protein sequence, read N- to C-terminus: Alpha-1,2-mannosyltransferase MNN5 (586 aa).

The first 29 residues, methionine 1–asparagine 29, serve as a signal peptide directing secretion. Asparagine 113, asparagine 136, asparagine 259, and asparagine 264 each carry an N-linked (GlcNAc...) asparagine glycan.

The protein belongs to the MNN1/MNT family. As to quaternary structure, interacts with SVP26. In terms of processing, glycosylated.

Its subcellular location is the golgi apparatus. It is found in the cis-Golgi network. It participates in protein modification; protein glycosylation. Responsible for addition of first and second mannose residues to the outer chain of core N-linked polysaccharides and to O-linked mannotriose. Implicated in late Golgi modifications. This chain is Alpha-1,2-mannosyltransferase MNN5 (MNN5), found in Saccharomyces cerevisiae (strain ATCC 204508 / S288c) (Baker's yeast).